We begin with the raw amino-acid sequence, 634 residues long: DNA-directed RNA polymerase subunit gamma (634 aa).

Residues C74, C76, C89, and C92 each coordinate Zn(2+). Positions 471, 473, and 475 each coordinate Mg(2+).

Belongs to the RNA polymerase beta' chain family. RpoC1 subfamily. In cyanobacteria the RNAP catalytic core is composed of 2 alpha, 1 beta, 1 beta', 1 gamma and 1 omega subunit. When a sigma factor is associated with the core the holoenzyme is formed, which can initiate transcription. Mg(2+) serves as cofactor. It depends on Zn(2+) as a cofactor.

It catalyses the reaction RNA(n) + a ribonucleoside 5'-triphosphate = RNA(n+1) + diphosphate. Functionally, DNA-dependent RNA polymerase catalyzes the transcription of DNA into RNA using the four ribonucleoside triphosphates as substrates. The polypeptide is DNA-directed RNA polymerase subunit gamma (Synechococcus sp. (strain CC9605)).